The sequence spans 558 residues: Serine/threonine-protein phosphatase 2B catalytic subunit (558 aa).

Positions 128, 130, and 156 each coordinate Fe cation. Positions 156 and 188 each coordinate Zn(2+). The active-site Proton donor is H189. Residues H237 and H319 each coordinate Zn(2+). Disordered stretches follow at residues 415-439 and 534-558; these read LRED…NQDP and ALER…LSTS. The span at 420–435 shows a compositional bias: low complexity; that stretch reads ATTSPGSASPALPSAA. Over residues 534–548 the composition is skewed to basic and acidic residues; sequence ALERATREADNDKKL. Polar residues predominate over residues 549-558; sequence QTLSRRLSTS.

This sequence belongs to the PPP phosphatase family. PP-2B subfamily. In terms of assembly, composed of two components (A and B), the A component is the catalytic subunit and the B component confers calcium sensitivity. Fe(3+) serves as cofactor. The cofactor is Zn(2+).

The catalysed reaction is O-phospho-L-seryl-[protein] + H2O = L-seryl-[protein] + phosphate. It catalyses the reaction O-phospho-L-threonyl-[protein] + H2O = L-threonyl-[protein] + phosphate. Calcium-dependent, calmodulin-stimulated protein phosphatase. This subunit may have a role in the calmodulin activation of calcineurin. This Neurospora crassa (strain ATCC 24698 / 74-OR23-1A / CBS 708.71 / DSM 1257 / FGSC 987) protein is Serine/threonine-protein phosphatase 2B catalytic subunit (cna-1).